Consider the following 387-residue polypeptide: Probable peptidoglycan glycosyltransferase FtsW (387 aa).

The next 9 membrane-spanning stretches (helical) occupy residues 20–40 (LYLL…VGSA), 61–81 (LFLL…LAFW), 86–106 (PVML…GIGV), 149–169 (TIRG…LLLL), 172–192 (DFGA…LGGA), 194–214 (LWHF…LAWY), 284–304 (LMGS…VLLI), 322–342 (GLGI…MGVL), and 349–369 (LPLM…VALI).

The protein belongs to the SEDS family. FtsW subfamily.

The protein localises to the cell inner membrane. It carries out the reaction [GlcNAc-(1-&gt;4)-Mur2Ac(oyl-L-Ala-gamma-D-Glu-L-Lys-D-Ala-D-Ala)](n)-di-trans,octa-cis-undecaprenyl diphosphate + beta-D-GlcNAc-(1-&gt;4)-Mur2Ac(oyl-L-Ala-gamma-D-Glu-L-Lys-D-Ala-D-Ala)-di-trans,octa-cis-undecaprenyl diphosphate = [GlcNAc-(1-&gt;4)-Mur2Ac(oyl-L-Ala-gamma-D-Glu-L-Lys-D-Ala-D-Ala)](n+1)-di-trans,octa-cis-undecaprenyl diphosphate + di-trans,octa-cis-undecaprenyl diphosphate + H(+). It participates in cell wall biogenesis; peptidoglycan biosynthesis. Its function is as follows. Peptidoglycan polymerase that is essential for cell division. In Nitrosococcus halophilus (strain Nc4), this protein is Probable peptidoglycan glycosyltransferase FtsW.